A 514-amino-acid polypeptide reads, in one-letter code: Histidine ammonia-lyase (514 aa).

A cross-link (5-imidazolinone (Ala-Gly)) is located at residues 144-146; sequence ASG. 2,3-didehydroalanine (Ser) is present on Ser145.

Belongs to the PAL/histidase family. In terms of processing, contains an active site 4-methylidene-imidazol-5-one (MIO), which is formed autocatalytically by cyclization and dehydration of residues Ala-Ser-Gly.

It localises to the cytoplasm. The catalysed reaction is L-histidine = trans-urocanate + NH4(+). It participates in amino-acid degradation; L-histidine degradation into L-glutamate; N-formimidoyl-L-glutamate from L-histidine: step 1/3. This is Histidine ammonia-lyase from Rhodospirillum rubrum (strain ATCC 11170 / ATH 1.1.1 / DSM 467 / LMG 4362 / NCIMB 8255 / S1).